A 362-amino-acid chain; its full sequence is Porin Omp2b (362 aa).

An N-terminal signal peptide occupies residues 1 to 22 (MNIKSLLLGSAAALVAASGAQA).

Belongs to the alphaproteobacteria porin family. As to quaternary structure, homotrimer.

The protein localises to the cell outer membrane. In terms of biological role, forms passive diffusion pores that allow small molecular weight hydrophilic materials across the outer membrane. In Brucella suis biovar 1 (strain 1330), this protein is Porin Omp2b (omp2b).